Here is a 200-residue protein sequence, read N- to C-terminus: Large ribosomal subunit protein uL4c (200 aa).

Residues 45–71 are disordered; that stretch reads RAEIRGGGRKPWKQKGTGRARAGSRRS. A compositionally biased stretch (basic residues) spans 51-68; that stretch reads GGRKPWKQKGTGRARAGS.

The protein belongs to the universal ribosomal protein uL4 family. As to quaternary structure, part of the 50S ribosomal subunit.

It is found in the plastid. It localises to the chloroplast. Probably binds the 23S rRNA. The protein is Large ribosomal subunit protein uL4c (rpl4) of Cyanidioschyzon merolae (strain NIES-3377 / 10D) (Unicellular red alga).